Reading from the N-terminus, the 179-residue chain is Inner membrane-spanning protein YciB (179 aa).

5 helical membrane-spanning segments follow: residues 22-42 (IYAA…YSWV), 50-70 (MALI…FFHN), 76-96 (WKVT…QWVM), 121-141 (LAWA…AFWL), and 149-169 (FKVF…GVYI).

This sequence belongs to the YciB family.

The protein resides in the cell inner membrane. Functionally, plays a role in cell envelope biogenesis, maintenance of cell envelope integrity and membrane homeostasis. This chain is Inner membrane-spanning protein YciB, found in Escherichia fergusonii (strain ATCC 35469 / DSM 13698 / CCUG 18766 / IAM 14443 / JCM 21226 / LMG 7866 / NBRC 102419 / NCTC 12128 / CDC 0568-73).